A 677-amino-acid polypeptide reads, in one-letter code: Multicopper oxidase GIP1 (677 aa).

Residues M1–A23 form the signal peptide. Plastocyanin-like domains are found at residues I31 to K150 and L179 to G379. The N-linked (GlcNAc...) asparagine glycan is linked to N76. Positions 80, 82, 130, and 132 each coordinate Cu cation. 4 N-linked (GlcNAc...) asparagine glycosylation sites follow: N228, N283, N396, and N478. Residues D469–D588 form the Plastocyanin-like 3 domain. Residue H503 coordinates Cu cation. N520 is a glycosylation site (N-linked (GlcNAc...) asparagine). A disordered region spans residues P629–S651.

The protein belongs to the multicopper oxidase family. Might be part of an extracellular enzyme complex composed of GIP1, aurF, aurO and aurS.

The protein resides in the secreted. Its subcellular location is the extracellular space. It participates in pigment biosynthesis. Its function is as follows. Multicopper oxidase; part of the gene cluster that mediates the biosynthesis of aurofusarin, a red mycelium pigment which is acting as a mycotoxin. The first step is performed by the polyketide synthase which condenses one acetyl-CoA and 6 malonyl-CoA units to form the first intermediate, the cyclic heptaketide and yellow pigment YWA1. The C2 hydroxyl group in the pyrone ring of YWA1 is probably formed during ring closure by an aldol-type cyclization reaction. The dehydratase aurZ then acts as the first tailoring enzyme in the aurofusarin biosynthetic pathway by converting YWA1 to nor-rubrofusarin. Nor-rubrofusarin is then methylated to rubrofusarin by the O-methyltransferase aurJ. Rubrofusarin is then transported across the plasma membrane by the rubrofusarin-specific pump aurT for further enzymatic processing by the extracellular complex composed of GIP1, aurF, aurO and aurS to yield aurofusarin. This is Multicopper oxidase GIP1 from Gibberella zeae (strain ATCC MYA-4620 / CBS 123657 / FGSC 9075 / NRRL 31084 / PH-1) (Wheat head blight fungus).